Here is a 156-residue protein sequence, read N- to C-terminus: Ribosomal RNA large subunit methyltransferase H (156 aa).

S-adenosyl-L-methionine contacts are provided by residues L73, G104, and 123 to 128 (LSALTL).

The protein belongs to the RNA methyltransferase RlmH family. As to quaternary structure, homodimer.

It localises to the cytoplasm. The catalysed reaction is pseudouridine(1915) in 23S rRNA + S-adenosyl-L-methionine = N(3)-methylpseudouridine(1915) in 23S rRNA + S-adenosyl-L-homocysteine + H(+). Specifically methylates the pseudouridine at position 1915 (m3Psi1915) in 23S rRNA. In Shewanella sp. (strain MR-7), this protein is Ribosomal RNA large subunit methyltransferase H.